A 246-amino-acid chain; its full sequence is Anamorsin homolog (246 aa).

The tract at residues 1-124 (MRVVVVDLDG…ARGTAFSLKS (124 aa)) is N-terminal SAM-like domain. The tract at residues 125 to 158 (RAVRVVTADAGWGADADVDDELIDESALLTELDV) is linker. Residues Cys168, Cys177, Cys180, and Cys182 each coordinate [2Fe-2S] cluster. The tract at residues 168 to 182 (CDVGAGKKACKNCTC) is fe-S binding site A. [4Fe-4S] cluster-binding residues include Cys206, Cys209, Cys217, and Cys220. 2 short sequence motifs (cx2C motif) span residues 206-209 (CGNC) and 217-220 (CAGC). The fe-S binding site B stretch occupies residues 206-220 (CGNCALGDAFRCAGC).

This sequence belongs to the anamorsin family. As to quaternary structure, monomer. [2Fe-2S] cluster serves as cofactor. Requires [4Fe-4S] cluster as cofactor.

It localises to the cytoplasm. It is found in the mitochondrion intermembrane space. Its function is as follows. Component of the cytosolic iron-sulfur (Fe-S) protein assembly (CIA) machinery. Required for the maturation of extramitochondrial Fe-S proteins. Part of an electron transfer chain functioning in an early step of cytosolic Fe-S biogenesis, facilitating the de novo assembly of a [4Fe-4S] cluster on the cytosolic Fe-S scaffold complex. Electrons are transferred from NADPH via a FAD- and FMN-containing diflavin oxidoreductase. Together with the diflavin oxidoreductase, also required for the assembly of the diferric tyrosyl radical cofactor of ribonucleotide reductase (RNR), probably by providing electrons for reduction during radical cofactor maturation in the catalytic small subunit. In Ostreococcus tauri, this protein is Anamorsin homolog.